The chain runs to 273 residues: 2-dehydro-3-deoxyphosphooctonate aldolase (273 aa).

It belongs to the KdsA family.

It localises to the cytoplasm. It carries out the reaction D-arabinose 5-phosphate + phosphoenolpyruvate + H2O = 3-deoxy-alpha-D-manno-2-octulosonate-8-phosphate + phosphate. It participates in carbohydrate biosynthesis; 3-deoxy-D-manno-octulosonate biosynthesis; 3-deoxy-D-manno-octulosonate from D-ribulose 5-phosphate: step 2/3. It functions in the pathway bacterial outer membrane biogenesis; lipopolysaccharide biosynthesis. This Nitratidesulfovibrio vulgaris (strain DP4) (Desulfovibrio vulgaris) protein is 2-dehydro-3-deoxyphosphooctonate aldolase.